The following is a 490-amino-acid chain: Glycogen synthase kinase-3 alpha (490 aa).

The span at 1–15 (MSGGGPSGGGPGGSG) shows a compositional bias: gly residues. Positions 1-97 (MSGGGPSGGG…PPGVKLGRDS (97 aa)) are disordered. The residue at position 2 (serine 2) is an N-acetylserine. A Phosphoserine modification is found at serine 2. The residue at position 21 (serine 21) is a Phosphoserine; by PKB/AKT1. The segment covering 25-82 (PGGGGGGGGGGPGGSASGPGGTGGGKASVGAMGGGVGASSSGGGPSGSGGGGSGGPGA) has biased composition (gly residues). Phosphoserine occurs at positions 72, 77, and 97. The 286-residue stretch at 119 to 404 (YTDIKVIGNG…PLEACAHSFF (286 aa)) folds into the Protein kinase domain. ATP-binding positions include 125–133 (IGNGSFGVV) and lysine 148. Aspartate 244 acts as the Proton acceptor in catalysis. At tyrosine 279 the chain carries Phosphotyrosine. Positions 451-490 (GPASPLTTSYNPSSQALTEAQTGQDWQPSDATTATLASSS) are disordered. A compositionally biased stretch (polar residues) spans 455–480 (PLTTSYNPSSQALTEAQTGQDWQPSD). A compositionally biased stretch (low complexity) spans 481–490 (ATTATLASSS).

This sequence belongs to the protein kinase superfamily. CMGC Ser/Thr protein kinase family. GSK-3 subfamily. In terms of assembly, monomer. Interacts with AXIN1 and CTNNB1/beta-catenin. Interacts with ARRB2. Interacts with CTNND2. Interacts with LMBR1L. Interacts with DDX3X. Interacts with TNFRSF10B. Post-translationally, phosphorylated by AKT1 at Ser-21: upon insulin-mediated signaling, the activated PKB/AKT1 protein kinase phosphorylates and deactivates GSK3A, resulting in the dephosphorylation and activation of GYS1. Activated by phosphorylation at Tyr-279.

The catalysed reaction is L-seryl-[tau protein] + ATP = O-phospho-L-seryl-[tau protein] + ADP + H(+). The enzyme catalyses L-threonyl-[tau protein] + ATP = O-phospho-L-threonyl-[tau protein] + ADP + H(+). It catalyses the reaction L-seryl-[protein] + ATP = O-phospho-L-seryl-[protein] + ADP + H(+). It carries out the reaction L-threonyl-[protein] + ATP = O-phospho-L-threonyl-[protein] + ADP + H(+). Its activity is regulated as follows. Activated by phosphorylation at Tyr-279. In response to insulin, inhibited by phosphorylation at Ser-21 by PKB/AKT1; phosphorylation at this site causes a conformational change, preventing access of substrates to the active site. Inhibited by lithium. Functionally, constitutively active protein kinase that acts as a negative regulator in the hormonal control of glucose homeostasis, Wnt signaling and regulation of transcription factors and microtubules, by phosphorylating and inactivating glycogen synthase (GYS1 or GYS2), CTNNB1/beta-catenin, APC and AXIN1. Requires primed phosphorylation of the majority of its substrates. Contributes to insulin regulation of glycogen synthesis by phosphorylating and inhibiting GYS1 activity and hence glycogen synthesis. Regulates glycogen metabolism in liver, but not in muscle. May also mediate the development of insulin resistance by regulating activation of transcription factors. In Wnt signaling, regulates the level and transcriptional activity of nuclear CTNNB1/beta-catenin. Facilitates amyloid precursor protein (APP) processing and the generation of APP-derived amyloid plaques found in Alzheimer disease. May be involved in the regulation of replication in pancreatic beta-cells. Is necessary for the establishment of neuronal polarity and axon outgrowth. Through phosphorylation of the anti-apoptotic protein MCL1, may control cell apoptosis in response to growth factors deprivation. Acts as a regulator of autophagy by mediating phosphorylation of KAT5/TIP60 under starvation conditions, activating KAT5/TIP60 acetyltransferase activity and promoting acetylation of key autophagy regulators, such as ULK1 and RUBCNL/Pacer. Negatively regulates extrinsic apoptotic signaling pathway via death domain receptors. Promotes the formation of an anti-apoptotic complex, made of DDX3X, BRIC2 and GSK3B, at death receptors, including TNFRSF10B. The anti-apoptotic function is most effective with weak apoptotic signals and can be overcome by stronger stimulation. This is Glycogen synthase kinase-3 alpha (Gsk3a) from Mus musculus (Mouse).